A 369-amino-acid chain; its full sequence is Cystathionine gamma-synthase (369 aa).

Lys-200 carries the N6-(pyridoxal phosphate)lysine modification.

The protein belongs to the trans-sulfuration enzymes family. In terms of assembly, homotetramer. The cofactor is pyridoxal 5'-phosphate.

Its subcellular location is the cytoplasm. It carries out the reaction O-succinyl-L-homoserine + L-cysteine = L,L-cystathionine + succinate + H(+). Its function is as follows. Catalyzes the formation of L-cystathionine from O-succinyl-L-homoserine (OSHS) and L-cysteine, via a gamma-replacement reaction. In the absence of thiol, catalyzes gamma-elimination to form 2-oxobutanoate, succinate and ammonia. The polypeptide is Cystathionine gamma-synthase (metB) (Haemophilus influenzae (strain ATCC 51907 / DSM 11121 / KW20 / Rd)).